The primary structure comprises 262 residues: MESALLLPSLLLVAAYPRGGSPQQEWMQSPPAPSVTSAPFWVRLNPELEAVPPGGSAWLNCSHNCPLPVHSSLRTQLRQGKIVNGSGWVSYQLLDVRAWNSKVRCVVTCAGETREATARITAYKRPRSVILEPPVLVGHKYTLRCYVTHVFPVGFLVVSLRRGGRVIYHESLERFTGSDLANVTLTYVMRAGLNDLWQPLTCHARLNLDGLVVRSSSAPVMLTVLALSPASIALASTSIATLVGILLAVGAVYVRKYLAVQT.

The first 22 residues, 1-22 (MESALLLPSLLLVAAYPRGGSP), serve as a signal peptide directing secretion. At 23–231 (QQEWMQSPPA…LTVLALSPAS (209 aa)) the chain is on the extracellular side. 2 Ig-like C2-type domains span residues 54–116 (GGSA…TREA) and 138–209 (GHKY…LNLD). Residues N60, N84, and N182 are each glycosylated (N-linked (GlcNAc...) asparagine). 4 disulfides stabilise this stretch: C61-C105, C61-C109, C65-C109, and C145-C202. Residues 232-252 (IALASTSIATLVGILLAVGAV) traverse the membrane as a helical segment. At 253–262 (YVRKYLAVQT) the chain is on the cytoplasmic side.

This sequence belongs to the immunoglobulin superfamily. ICAM family.

The protein resides in the cell membrane. Its subcellular location is the secreted. In terms of biological role, adhesion molecule that binds to leukocyte adhesion LFA-1 protein LFA-1 (integrin alpha-L/beta-2). ICAM4 is also a ligand for alpha-4/beta-1 and alpha-V integrins. Isoform 2 may modulate binding of membrane-associated ICAM4. This is Intercellular adhesion molecule 4 (Icam4) from Mus musculus (Mouse).